We begin with the raw amino-acid sequence, 399 residues long: Dual-specificity RNA methyltransferase RlmN (399 aa).

The active-site Proton acceptor is the Glu122. One can recognise a Radical SAM core domain in the interval 128–371 (ETDRGTLCVS…VRTPRGRDIL (244 aa)). Cysteines 135 and 374 form a disulfide. [4Fe-4S] cluster-binding residues include Cys142, Cys146, and Cys149. S-adenosyl-L-methionine-binding positions include 200-201 (GE), Ser232, 254-256 (SLH), and Asn331. The active-site S-methylcysteine intermediate is the Cys374.

Belongs to the radical SAM superfamily. RlmN family. It depends on [4Fe-4S] cluster as a cofactor.

It is found in the cytoplasm. It catalyses the reaction adenosine(2503) in 23S rRNA + 2 reduced [2Fe-2S]-[ferredoxin] + 2 S-adenosyl-L-methionine = 2-methyladenosine(2503) in 23S rRNA + 5'-deoxyadenosine + L-methionine + 2 oxidized [2Fe-2S]-[ferredoxin] + S-adenosyl-L-homocysteine. The enzyme catalyses adenosine(37) in tRNA + 2 reduced [2Fe-2S]-[ferredoxin] + 2 S-adenosyl-L-methionine = 2-methyladenosine(37) in tRNA + 5'-deoxyadenosine + L-methionine + 2 oxidized [2Fe-2S]-[ferredoxin] + S-adenosyl-L-homocysteine. Specifically methylates position 2 of adenine 2503 in 23S rRNA and position 2 of adenine 37 in tRNAs. m2A2503 modification seems to play a crucial role in the proofreading step occurring at the peptidyl transferase center and thus would serve to optimize ribosomal fidelity. In Rhodopseudomonas palustris (strain ATCC BAA-98 / CGA009), this protein is Dual-specificity RNA methyltransferase RlmN.